The sequence spans 161 residues: Cyclic pyranopterin monophosphate synthase (161 aa).

Substrate-binding positions include 75–77 (LCH) and 113–114 (ME). The active site involves D128.

It belongs to the MoaC family. Homohexamer; trimer of dimers.

It carries out the reaction (8S)-3',8-cyclo-7,8-dihydroguanosine 5'-triphosphate = cyclic pyranopterin phosphate + diphosphate. The protein operates within cofactor biosynthesis; molybdopterin biosynthesis. Its function is as follows. Catalyzes the conversion of (8S)-3',8-cyclo-7,8-dihydroguanosine 5'-triphosphate to cyclic pyranopterin monophosphate (cPMP). The protein is Cyclic pyranopterin monophosphate synthase of Salmonella arizonae (strain ATCC BAA-731 / CDC346-86 / RSK2980).